Reading from the N-terminus, the 60-residue chain is Cytotoxin 2 (60 aa).

4 cysteine pairs are disulfide-bonded: C3–C21, C14–C38, C42–C53, and C54–C59.

Belongs to the three-finger toxin family. Short-chain subfamily. Type IA cytotoxin sub-subfamily. Monomer in solution; Homodimer and oligomer in the presence of negatively charged lipids forming a pore with a size ranging between 20 and 30 Angstroms. In terms of tissue distribution, expressed by the venom gland.

Its subcellular location is the secreted. It is found in the target cell membrane. In terms of biological role, this three-finger cytotoxin is a basic protein that interacts and penetrates into the cell membrane, with the tips of all the three loops. Cytotoxins which have a Pro-30 (P-type) interacts with membrane stronger that those which have a 'Ser-28' (S-type). CTII interacts with membrane stronger than CTI. The sequence is that of Cytotoxin 2 from Naja oxiana (Central Asian cobra).